A 200-amino-acid polypeptide reads, in one-letter code: Pyrrolidone-carboxylate peptidase (200 aa).

Active-site residues include Glu78, Cys141, and His165.

It belongs to the peptidase C15 family. Homotetramer.

The protein localises to the cytoplasm. It catalyses the reaction Release of an N-terminal pyroglutamyl group from a polypeptide, the second amino acid generally not being Pro.. Removes 5-oxoproline from various penultimate amino acid residues except L-proline. The sequence is that of Pyrrolidone-carboxylate peptidase from Lactobacillus helveticus (strain DPC 4571).